Reading from the N-terminus, the 1304-residue chain is DNA-directed RNA polymerase subunit beta' (1304 aa).

Residues 1-23 are disordered; sequence MSEKGRFSAGLSRQAADGNKADA. Zn(2+)-binding residues include cysteine 241, cysteine 315, cysteine 322, and cysteine 325. A compositionally biased stretch (acidic residues) spans 1256 to 1268; sequence AAEPEPDEEEEEP. A disordered region spans residues 1256–1304; it reads AAEPEPDEEEEEPAVLPELPPRLILEDDQLIDDSTPAFDELEEDDDEEE. Low complexity predominate over residues 1269 to 1278; it reads AVLPELPPRL. Positions 1294–1304 are enriched in acidic residues; sequence DELEEDDDEEE.

It belongs to the RNA polymerase beta' chain family. RpoC2 subfamily. As to quaternary structure, in cyanobacteria the RNAP catalytic core is composed of 2 alpha, 1 beta, 1 beta', 1 gamma and 1 omega subunit. When a sigma factor is associated with the core the holoenzyme is formed, which can initiate transcription. Requires Zn(2+) as cofactor.

It carries out the reaction RNA(n) + a ribonucleoside 5'-triphosphate = RNA(n+1) + diphosphate. DNA-dependent RNA polymerase catalyzes the transcription of DNA into RNA using the four ribonucleoside triphosphates as substrates. The chain is DNA-directed RNA polymerase subunit beta' from Synechococcus sp. (strain JA-2-3B'a(2-13)) (Cyanobacteria bacterium Yellowstone B-Prime).